The following is an 812-amino-acid chain: MTEFPKNYNFTENEKKWQQIWQAQQIYAYDPNISKEETYVVDTPPPTVSGQLHIGHVYSYTQTDFIVRFQRMIGKNIFYPMGFDDNGLPTERLVEKQKQIKAYNMGRDEFIKICEEVVESEEEKFRRLFNQIALSVDWSLEYQTISPLSRKISQMSFLDLVKKGKIYRNDQPILWDPVDGTALAQADIEDKAKTSFMNYIIFKTEQGESLTIATTRPELLPACIAVFYHPDDKRYKHLACKSAITPLFNEKVPLLASPLVQQDKGTGLVMCCTFGDQTDITWWKTHNLPLKTIITKKGTINFPHNIAIDGLKIKEARIKIIDILKEQKLITKQEEITQTVKCAERSGAPLEILTVPQWFVKTISHKEALLKRANELNWRPNNMKIRLENWINAISWDWCISRQRYFGVPFPVWYSKRVGEEGKILYADISQLPVDPLKDLPIGYSKEEVEPDLDVMDTWATSSVSPQLSTHCISDNFAVNKDRHNKLFPMDLRPQAHEIIRTWAFYTILKAHLHQNTLPWGNIMVSGWCLAEDRSKMSKSKGNVLVPEKLLEQYGSDVIRYWSANSKLGADTAYSEDVMKNGKRLVNKLWNACKFIFIHCNKLKDVDKKASLFDIKEQITNEFDQWMINKLVELVNAATNELQNYEYANAMHLTEKFFWVIFCDNYLEISKTRSYDEENKNPQGQYSSILTLYHVMQILLKLFAPFIPHITEELYQILYSENSIHVKGNWVNYGDLHYGIDVTQSEGLIAILDIVRKFKAENNLSIKAPIKLLEVSGIELSAELTEDLKNVTSAEEIQFEGQGDKIKVNVIF.

A 'HIGH' region motif is present at residues 46–56 (PTVSGQLHIGH). Positions 536-540 (KMSKS) match the 'KMSKS' region motif. Residue Lys-539 coordinates ATP.

This sequence belongs to the class-I aminoacyl-tRNA synthetase family. ValS type 2 subfamily. As to quaternary structure, monomer.

Its subcellular location is the cytoplasm. It catalyses the reaction tRNA(Val) + L-valine + ATP = L-valyl-tRNA(Val) + AMP + diphosphate. Its function is as follows. Catalyzes the attachment of valine to tRNA(Val). As ValRS can inadvertently accommodate and process structurally similar amino acids such as threonine, to avoid such errors, it has a 'posttransfer' editing activity that hydrolyzes mischarged Thr-tRNA(Val) in a tRNA-dependent manner. In Rickettsia akari (strain Hartford), this protein is Valine--tRNA ligase.